The following is a 403-amino-acid chain: S-adenosylmethionine synthase (403 aa).

H16 is an ATP binding site. D18 is a Mg(2+) binding site. A K(+)-binding site is contributed by E44. 2 residues coordinate L-methionine: E57 and Q100. Positions 100–110 are flexible loop; that stretch reads QSSDIAQGVDR. Residues 165–167, D242, 248–249, A265, and K269 contribute to the ATP site; these read DAK and RK. D242 contacts L-methionine. Residue K273 coordinates L-methionine.

Belongs to the AdoMet synthase family. Homotetramer; dimer of dimers. Mg(2+) is required as a cofactor. It depends on K(+) as a cofactor.

The protein resides in the cytoplasm. It catalyses the reaction L-methionine + ATP + H2O = S-adenosyl-L-methionine + phosphate + diphosphate. It functions in the pathway amino-acid biosynthesis; S-adenosyl-L-methionine biosynthesis; S-adenosyl-L-methionine from L-methionine: step 1/1. Catalyzes the formation of S-adenosylmethionine (AdoMet) from methionine and ATP. The overall synthetic reaction is composed of two sequential steps, AdoMet formation and the subsequent tripolyphosphate hydrolysis which occurs prior to release of AdoMet from the enzyme. The sequence is that of S-adenosylmethionine synthase from Nitrosococcus oceani (strain ATCC 19707 / BCRC 17464 / JCM 30415 / NCIMB 11848 / C-107).